The primary structure comprises 167 residues: Ribosome maturation factor RimP (167 aa).

Belongs to the RimP family.

The protein localises to the cytoplasm. In terms of biological role, required for maturation of 30S ribosomal subunits. The protein is Ribosome maturation factor RimP of Streptomyces griseus subsp. griseus (strain JCM 4626 / CBS 651.72 / NBRC 13350 / KCC S-0626 / ISP 5235).